We begin with the raw amino-acid sequence, 484 residues long: Bifunctional protein GlmU (484 aa).

The tract at residues 1–240 (MSNPHSSAVI…HRELAGVNDR (240 aa)) is pyrophosphorylase. Residues 12-15 (LAAG), lysine 26, glutamine 83, and 88-89 (GT) each bind UDP-N-acetyl-alpha-D-glucosamine. Aspartate 113 contributes to the Mg(2+) binding site. The UDP-N-acetyl-alpha-D-glucosamine site is built by glycine 150, glutamate 165, asparagine 180, and asparagine 238. Asparagine 238 contacts Mg(2+). The linker stretch occupies residues 241 to 261 (VQLAQAGKILNQRLVEDAMRN). The segment at 262–484 (GATIVDPDTT…QAHAHETKEG (223 aa)) is N-acetyltransferase. 2 residues coordinate UDP-N-acetyl-alpha-D-glucosamine: arginine 343 and lysine 361. Histidine 373 (proton acceptor) is an active-site residue. UDP-N-acetyl-alpha-D-glucosamine-binding residues include tyrosine 376 and asparagine 387. Residues alanine 390, 396-397 (NY), serine 415, and alanine 433 contribute to the acetyl-CoA site. The tract at residues 461 to 484 (EKNRPGTPAADAARQAHAHETKEG) is disordered.

This sequence in the N-terminal section; belongs to the N-acetylglucosamine-1-phosphate uridyltransferase family. In the C-terminal section; belongs to the transferase hexapeptide repeat family. In terms of assembly, homotrimer. Requires Mg(2+) as cofactor.

The protein resides in the cytoplasm. It catalyses the reaction alpha-D-glucosamine 1-phosphate + acetyl-CoA = N-acetyl-alpha-D-glucosamine 1-phosphate + CoA + H(+). The catalysed reaction is N-acetyl-alpha-D-glucosamine 1-phosphate + UTP + H(+) = UDP-N-acetyl-alpha-D-glucosamine + diphosphate. The protein operates within nucleotide-sugar biosynthesis; UDP-N-acetyl-alpha-D-glucosamine biosynthesis; N-acetyl-alpha-D-glucosamine 1-phosphate from alpha-D-glucosamine 6-phosphate (route II): step 2/2. Its pathway is nucleotide-sugar biosynthesis; UDP-N-acetyl-alpha-D-glucosamine biosynthesis; UDP-N-acetyl-alpha-D-glucosamine from N-acetyl-alpha-D-glucosamine 1-phosphate: step 1/1. It functions in the pathway bacterial outer membrane biogenesis; LPS lipid A biosynthesis. Catalyzes the last two sequential reactions in the de novo biosynthetic pathway for UDP-N-acetylglucosamine (UDP-GlcNAc). The C-terminal domain catalyzes the transfer of acetyl group from acetyl coenzyme A to glucosamine-1-phosphate (GlcN-1-P) to produce N-acetylglucosamine-1-phosphate (GlcNAc-1-P), which is converted into UDP-GlcNAc by the transfer of uridine 5-monophosphate (from uridine 5-triphosphate), a reaction catalyzed by the N-terminal domain. The polypeptide is Bifunctional protein GlmU (Corynebacterium diphtheriae (strain ATCC 700971 / NCTC 13129 / Biotype gravis)).